Reading from the N-terminus, the 367-residue chain is Histone RNA hairpin-binding protein (367 aa).

Polar residues predominate over residues 1-12; that stretch reads MAQKTPTKGTRS. Disordered stretches follow at residues 1–24 and 49–200; these read MAQK…SPIK and EVTE…HWEE. Basic and acidic residues predominate over residues 57–73; that stretch reads LASRLEEERRCKSESRR. Residues 147–156 show a composition bias toward polar residues; the sequence is SNASTINEGA. Residues 183–192 show a composition bias toward low complexity; it reads SDSSSVASSP. Residues 206 to 275 are RNA-binding; it reads CTDEAVLKRR…KWKRSLYEYC (70 aa). Residues 342-367 are disordered; that stretch reads MDESTLKASTNTDPSAPTDFSKMSSH. Over residues 347–356 the composition is skewed to polar residues; the sequence is LKASTNTDPS.

It belongs to the SLBP family. Post-translationally, ubiquitinated by the CBC(fem-1) (Cul2-ElonginB-ElonginC) E3 ubiquitin-protein ligase complex, leading to its degradation.

In terms of biological role, involved in histone pre-mRNA 3' processing. Required for chromosome condensation, progression of cell death and morphogenesis. This chain is Histone RNA hairpin-binding protein (cdl-1), found in Caenorhabditis elegans.